A 94-amino-acid polypeptide reads, in one-letter code: Long neurotoxin-like OH-31 (94 aa).

An N-terminal signal peptide occupies residues 1-19 (MKTLLLTLVVVTILCLDLG). Disulfide bonds link Cys35/Cys55, Cys37/Cys66, Cys70/Cys81, and Cys82/Cys87.

Belongs to the three-finger toxin family. Long-chain subfamily. Type II alpha-neurotoxin sub-subfamily. Expressed by the venom gland.

The protein resides in the secreted. Functionally, binds with high affinity to muscular nicotinic acetylcholine receptors (nAChRs), whereas it binds with a low affinity to neuronal alpha-7/CHRNA7 nAChRs. The sequence is that of Long neurotoxin-like OH-31 from Ophiophagus hannah (King cobra).